The following is a 686-amino-acid chain: Phosphatidylinositol 4,5-bisphosphate-binding protein SLM1 (686 aa).

The tract at residues 33–147 (RSMTSADHAN…KQLQGKNSLT (115 aa)) is disordered. The segment covering 45–63 (QQQQQQQQQQQQQQQQQQQ) has biased composition (low complexity). A compositionally biased stretch (polar residues) spans 64–126 (SASFQNGSLT…PNIDSNTNVT (63 aa)). Residues 133-144 (NNNNGKQLQGKN) show a composition bias toward low complexity. Phosphoserine is present on residues Ser145, Ser150, and Ser153. The segment covering 157–172 (SSLQRQRLAQQQQQQQ) has biased composition (low complexity). The disordered stretch occupies residues 157 to 176 (SSLQRQRLAQQQQQQQDPRS). A coiled-coil region spans residues 296 to 381 (RLEDLRRDLI…FLHEAFDNLE (86 aa)). A PH domain is found at 468 to 581 (YEIKSGFLER…WFDNLKILTS (114 aa)). A disordered region spans residues 626–669 (VENDENDDINSNYVGSTVTPKLDNQTNTNTSMSSLPDTNDSELQ). Residues 634-663 (INSNYVGSTVTPKLDNQTNTNTSMSSLPDT) are compositionally biased toward polar residues. Residues 673–678 (PNIYIQ) carry the PXIXIT-like, required for interaction with CNA1 and CNA2, and calcineurin-dependent dephosphorylation motif.

As to quaternary structure, heterodimer of SLM1-SLM2. Binds phosphatidylinositol 4,5-bisphosphate, which is required for function. Interacts with the TORC2 subunits AVO2, BIT61 and TOR2. Interacts with the calcineurin catalytic subunits CNA1 and CNA2. Post-translationally, phosphorylated by the target of rapamycin complex 2 (TORC2) and dephosphorylated by serine/threonine-protein phosphatase 2B (calcineurin). Dephosphorylated in response to the disruption or inhibition of sphingolipid synthesis.

The protein localises to the cell membrane. Functionally, together with SLM2, acts as an effector of the TORC2- and calcineurin-signaling pathways. Phosphorylated and activated by TORC2 under favorable growth conditions. Mediates actin polarization via inhibition of calcineurin-dependent transcription. Upon nutrient limitation or environmental stress, gets dephosphorylated by calcineurin. Dephosphorylation inhibits its interaction with TORC2, thereby antagonizing TORC2 signaling and mediating calcineurin-dependent actin depolarization. May play a role in the response to the disruption of sphingolipid synthesis, where dephosphorylation of SLM1 leads to the activation and phosphorylation of YPK1 through the TORC2 and PKH1 pathways, which in turn phosphorylates ORM1 and LAG1 to activate sphingolipid synthesis. Also functions in heat-induced, calcineurin-mediated uracil permease (FUR4) endocytosis. In Saccharomyces cerevisiae (strain ATCC 204508 / S288c) (Baker's yeast), this protein is Phosphatidylinositol 4,5-bisphosphate-binding protein SLM1 (SLM1).